We begin with the raw amino-acid sequence, 153 residues long: MQRSKIKVEIKRLSHGEDLSLPCYATVQSAGMDLYAALNDSAVLNPLERLLVPTGIVIAIPNGFEGQVRPRSGLAAKHGITVLNSPGTIDSDYRGEVKICLINLSNQPYEIKRGDRIAQILISPVSQVIWDDREEFCAEETGRNAGGFGSSGR.

Residues R71–G73, N84, T88–D90, and K98 each bind substrate.

Belongs to the dUTPase family. The cofactor is Mg(2+).

The catalysed reaction is dUTP + H2O = dUMP + diphosphate + H(+). It participates in pyrimidine metabolism; dUMP biosynthesis; dUMP from dCTP (dUTP route): step 2/2. Its function is as follows. This enzyme is involved in nucleotide metabolism: it produces dUMP, the immediate precursor of thymidine nucleotides and it decreases the intracellular concentration of dUTP so that uracil cannot be incorporated into DNA. This is Deoxyuridine 5'-triphosphate nucleotidohydrolase from Wolbachia sp. subsp. Drosophila simulans (strain wRi).